The sequence spans 731 residues: MFRVFGSFGSKGNQSSGEEQSTKTKQVLKQANDFEIALKAMDFVLDDRTDEGLNLLKKAEMETGSDQTILTLARGVIEFLQATLSFETEEMKRAAITLGKAEQMSWKSKQNAEKTNFRSSSIYPPGTVYAVTYTESCLLHALLMLFSESMMEAAKALLKLRRAYTMLQDIMVTVKKAERSKNSSSPSPSEKSQESCGSFVSAETTFISVDIPYKLSSEDKSNPLLLEFAEKIYTMRMGRLSGAHIGNTPSFHRLRDDLGLQTTPSQASDRHSVSDDFDLEQATIDEFIHSGANLCYGILQVVLSLLPPAIGAVLSIVGFKGSREEGLRLVWKATKERNVHGCIGLLGLMFYYDGPFQFTDADFDIPPNDNGSRALNKSRTNDSSLLPGYMDSATLLHPGKILEDALLKARALFPNSALWLLNEAKMLAGKGRLRDSLALMDSIDVNSIRMRQVKSLMVFERAILLVNLHEYNRAADDLISLLDISDWSHALYTYFAGCCYLENWRMTQLGLLNDGKEQFYKERARELIFDAPSLLGKKTFKSKNLPLDRFMLRKVQQFNNMQKKLNLQEPLDSIATSPVHELAYFYNGYNRMTENDLILTKKMLTEYHNPAIDSEDPDQELIRNLLLSLTLRRLGDAERGLALLDDIVLPKIFYIQNGKVKYFKKTEDPWAYPAALYERALFCWKLGGMESLNECREWLLRAQNYAADYELSTRIGMKIKAALDRVENALA.

Positions 1–26 (MFRVFGSFGSKGNQSSGEEQSTKTKQ) are disordered. The segment covering 10–26 (SKGNQSSGEEQSTKTKQ) has biased composition (polar residues). A phosphoserine mark is found at S265, S268, and S378. Residue T380 is modified to Phosphothreonine. Residues S383 and S392 each carry the phosphoserine modification.

Belongs to the IML2 family. Interacts with lipid droplet proteins PET10 and PDR16.

It localises to the cytoplasm. It is found in the nucleus. In terms of biological role, inclusion body (IB) resident protein that interacts strongly with lipid droplet (LD) proteins. Involved in LD-mediated IB clearing after protein folding stress, probably by enabling access to the IBs of an LD-stored soluble sterol derivative that acts as a chaperone in inclusion clearing. The polypeptide is Inclusion body clearance protein IML2 (Saccharomyces cerevisiae (strain ATCC 204508 / S288c) (Baker's yeast)).